A 2605-amino-acid chain; its full sequence is Non-reducing polyketide synthase dbaI (2605 aa).

The N-terminal acylcarrier protein transacylase domain (SAT) stretch occupies residues 97–243 (PNTLLIPLVM…PASEISDLHR (147 aa)). The active-site Nucleophile; for transacylase activity is Cys-144. Residue His-262 is the Proton donor/acceptor; for transacylase activity of the active site. Residues 382–798 (ENDIAVVGMS…GSNASIVVTQ (417 aa)) enclose the Ketosynthase family 3 (KS3) domain. Residues Cys-547, His-682, and His-721 each act as for beta-ketoacyl synthase activity in the active site. Positions 908-1195 (FGGQVSTFVG…VTNMASRALG (288 aa)) are malonyl-CoA:ACP transacylase (MAT) domain. Positions 1285–1420 (PNTLLTFVGY…GRVIFRSISD (136 aa)) are N-terminal hotdog fold. Positions 1285-1596 (PNTLLTFVGY…YVKIPKASMS (312 aa)) constitute a PKS/mFAS DH domain. Residues 1316-1594 (LIRGHIIAQT…ISYVKIPKAS (279 aa)) are product template (PT) domain. The Proton acceptor; for dehydratase activity role is filled by His-1320. Positions 1447–1596 (EVDEVLQNRN…YVKIPKASMS (150 aa)) are C-terminal hotdog fold. The Proton donor; for dehydratase activity role is filled by Asp-1504. The Carrier domain occupies 1665-1739 (GQLTQRIKSI…SLIKCVRKAM (75 aa)). O-(pantetheine 4'-phosphoryl)serine is present on Ser-1699. A disordered region spans residues 1742–1780 (DADSAEYTTEQSTSEAADSDDKSTNYTTPSTPGEEALDM). Positions 1747–1757 (EYTTEQSTSEA) are enriched in polar residues. Residues 1963 to 2151 (DWPLNRLFYR…VGYGHVDWTD (189 aa)) are methyltransferase domain. Residues 2230–2473 (VTGATGSLGC…LSWTPVDVVA (244 aa)) form an NADPH-binding (R) domain region.

It carries out the reaction 4 malonyl-CoA + acetyl-CoA + AH2 + S-adenosyl-L-methionine + 3 H(+) = 2,4-dihydroxy-3-methyl-6-(2-oxopropyl)benzaldehyde + A + S-adenosyl-L-homocysteine + 4 CO2 + 5 CoA + H2O. Its pathway is secondary metabolite biosynthesis. Non-reducing polyketide synthase; part of the gene cluster that mediates the biosynthesis of the antibiotic 2,4-dihydroxy-3-methyl-6-(2-oxopropyl)benzaldehyde (DHMBA) and its derivatives. The direct non-reducing polyketide synthase dbaI product is 2,4-dihydroxy-3-methyl-6-(2-oxopropyl)benzaldehyde (DHMBA), produced by condensation of one acetyl-CoA starter unit with 4 malonyl-CoA units and one methylation step. The FAD-dependent monooxygenase dbaH is responsible for the synthesis of yellow pigments derived from the oxidation of DHMBA. The roles of dbaB, C, E and F have still to be determined. The polypeptide is Non-reducing polyketide synthase dbaI (Emericella nidulans (strain FGSC A4 / ATCC 38163 / CBS 112.46 / NRRL 194 / M139) (Aspergillus nidulans)).